Consider the following 377-residue polypeptide: Histidinol-phosphate aminotransferase (377 aa).

Position 232 is an N6-(pyridoxal phosphate)lysine (Lys-232).

It belongs to the class-II pyridoxal-phosphate-dependent aminotransferase family. Histidinol-phosphate aminotransferase subfamily. In terms of assembly, homodimer. Pyridoxal 5'-phosphate serves as cofactor.

The catalysed reaction is L-histidinol phosphate + 2-oxoglutarate = 3-(imidazol-4-yl)-2-oxopropyl phosphate + L-glutamate. Its pathway is amino-acid biosynthesis; L-histidine biosynthesis; L-histidine from 5-phospho-alpha-D-ribose 1-diphosphate: step 7/9. This Mycobacterium sp. (strain KMS) protein is Histidinol-phosphate aminotransferase.